We begin with the raw amino-acid sequence, 157 residues long: Ciliary microtubule inner protein 5 (157 aa).

Disordered regions lie at residues 1–57 (MGSR…SALG) and 92–124 (DPMG…AVGS). Over residues 92 to 109 (DPMGNKKEPVKLPDHVPR) the composition is skewed to basic and acidic residues.

It localises to the cell projection. Its subcellular location is the cilium. In Bos taurus (Bovine), this protein is Ciliary microtubule inner protein 5 (CIMIP5).